The following is a 412-amino-acid chain: Multifunctional CCA protein (412 aa).

ATP-binding residues include G8 and R11. Residues G8 and R11 each coordinate CTP. Residues D21 and D23 each coordinate Mg(2+). The ATP site is built by R91, R137, and R140. Residues R91, R137, and R140 each coordinate CTP. In terms of domain architecture, HD spans 228 to 329; sequence TGIHTLMTLS…VKLFDSIDAW (102 aa).

Belongs to the tRNA nucleotidyltransferase/poly(A) polymerase family. Bacterial CCA-adding enzyme type 1 subfamily. Monomer. Can also form homodimers and oligomers. The cofactor is Mg(2+). It depends on Ni(2+) as a cofactor.

It catalyses the reaction a tRNA precursor + 2 CTP + ATP = a tRNA with a 3' CCA end + 3 diphosphate. The catalysed reaction is a tRNA with a 3' CCA end + 2 CTP + ATP = a tRNA with a 3' CCACCA end + 3 diphosphate. In terms of biological role, catalyzes the addition and repair of the essential 3'-terminal CCA sequence in tRNAs without using a nucleic acid template. Adds these three nucleotides in the order of C, C, and A to the tRNA nucleotide-73, using CTP and ATP as substrates and producing inorganic pyrophosphate. tRNA 3'-terminal CCA addition is required both for tRNA processing and repair. Also involved in tRNA surveillance by mediating tandem CCA addition to generate a CCACCA at the 3' terminus of unstable tRNAs. While stable tRNAs receive only 3'-terminal CCA, unstable tRNAs are marked with CCACCA and rapidly degraded. The protein is Multifunctional CCA protein of Escherichia coli (strain K12 / MC4100 / BW2952).